A 222-amino-acid polypeptide reads, in one-letter code: Probable transaldolase (222 aa).

Lysine 83 serves as the catalytic Schiff-base intermediate with substrate.

This sequence belongs to the transaldolase family. Type 3B subfamily.

It localises to the cytoplasm. It carries out the reaction D-sedoheptulose 7-phosphate + D-glyceraldehyde 3-phosphate = D-erythrose 4-phosphate + beta-D-fructose 6-phosphate. It functions in the pathway carbohydrate degradation; pentose phosphate pathway; D-glyceraldehyde 3-phosphate and beta-D-fructose 6-phosphate from D-ribose 5-phosphate and D-xylulose 5-phosphate (non-oxidative stage): step 2/3. Functionally, transaldolase is important for the balance of metabolites in the pentose-phosphate pathway. This Nitrosopumilus maritimus (strain SCM1) protein is Probable transaldolase.